Here is a 228-residue protein sequence, read N- to C-terminus: ATP-dependent dethiobiotin synthetase BioD (228 aa).

13 to 18 (DIGKTF) contributes to the ATP binding site. Mg(2+) is bound at residue threonine 17. The active site involves lysine 38. Residue serine 42 participates in substrate binding. ATP is bound by residues aspartate 55, 116-119 (EGSG), 179-180 (NK), and 208-210 (PKI). Residues aspartate 55 and glutamate 116 each contribute to the Mg(2+) site.

It belongs to the dethiobiotin synthetase family. In terms of assembly, homodimer. The cofactor is Mg(2+).

Its subcellular location is the cytoplasm. The enzyme catalyses (7R,8S)-7,8-diammoniononanoate + CO2 + ATP = (4R,5S)-dethiobiotin + ADP + phosphate + 3 H(+). It functions in the pathway cofactor biosynthesis; biotin biosynthesis; biotin from 7,8-diaminononanoate: step 1/2. In terms of biological role, catalyzes a mechanistically unusual reaction, the ATP-dependent insertion of CO2 between the N7 and N8 nitrogen atoms of 7,8-diaminopelargonic acid (DAPA, also called 7,8-diammoniononanoate) to form a ureido ring. The chain is ATP-dependent dethiobiotin synthetase BioD from Clostridium perfringens (strain 13 / Type A).